The primary structure comprises 317 residues: 4-hydroxy-3-methylbut-2-enyl diphosphate reductase (317 aa).

Residue C12 coordinates [4Fe-4S] cluster. (2E)-4-hydroxy-3-methylbut-2-enyl diphosphate contacts are provided by H41 and H74. Dimethylallyl diphosphate-binding residues include H41 and H74. Positions 41 and 74 each coordinate isopentenyl diphosphate. C97 contacts [4Fe-4S] cluster. Position 125 (H125) interacts with (2E)-4-hydroxy-3-methylbut-2-enyl diphosphate. H125 lines the dimethylallyl diphosphate pocket. H125 contributes to the isopentenyl diphosphate binding site. Catalysis depends on E127, which acts as the Proton donor. T168 provides a ligand contact to (2E)-4-hydroxy-3-methylbut-2-enyl diphosphate. C198 is a [4Fe-4S] cluster binding site. S226, S227, N228, and S270 together coordinate (2E)-4-hydroxy-3-methylbut-2-enyl diphosphate. Residues S226, S227, N228, and S270 each contribute to the dimethylallyl diphosphate site. The isopentenyl diphosphate site is built by S226, S227, N228, and S270.

Belongs to the IspH family. In terms of assembly, homodimer. The cofactor is [4Fe-4S] cluster.

It carries out the reaction isopentenyl diphosphate + 2 oxidized [2Fe-2S]-[ferredoxin] + H2O = (2E)-4-hydroxy-3-methylbut-2-enyl diphosphate + 2 reduced [2Fe-2S]-[ferredoxin] + 2 H(+). The enzyme catalyses dimethylallyl diphosphate + 2 oxidized [2Fe-2S]-[ferredoxin] + H2O = (2E)-4-hydroxy-3-methylbut-2-enyl diphosphate + 2 reduced [2Fe-2S]-[ferredoxin] + 2 H(+). It participates in isoprenoid biosynthesis; dimethylallyl diphosphate biosynthesis; dimethylallyl diphosphate from (2E)-4-hydroxy-3-methylbutenyl diphosphate: step 1/1. It functions in the pathway isoprenoid biosynthesis; isopentenyl diphosphate biosynthesis via DXP pathway; isopentenyl diphosphate from 1-deoxy-D-xylulose 5-phosphate: step 6/6. Its function is as follows. Catalyzes the conversion of 1-hydroxy-2-methyl-2-(E)-butenyl 4-diphosphate (HMBPP) into a mixture of isopentenyl diphosphate (IPP) and dimethylallyl diphosphate (DMAPP). Acts in the terminal step of the DOXP/MEP pathway for isoprenoid precursor biosynthesis. This Yersinia pseudotuberculosis serotype O:1b (strain IP 31758) protein is 4-hydroxy-3-methylbut-2-enyl diphosphate reductase.